A 158-amino-acid chain; its full sequence is U-limacoditoxin(8)-Dv66 (158 aa).

An N-terminal signal peptide occupies residues 1–24 (MALRAPWIALCCVLAVLFVVPAAT). A propeptide spanning residues 25–32 (RDEERQKR) is cleaved from the precursor. 2 consecutive repeat copies span residues 33 to 78 (GVDF…RQKR) and 79 to 124 (GVDF…RQKR). Residues 33–158 (GVDFGLQRGF…AQDPHGPGRK (126 aa)) are 3 X 46 AA tandem repeats. Pro-63 is modified (proline amide). Residues 64-78 (GRKRRDAYEMERQKR) constitute a propeptide that is removed on maturation. Positions 101–120 (ARAQDPHGPGRKRRDAYEME) are disordered. Pro-109 carries the post-translational modification Proline amide. The propeptide occupies 110–124 (GRKRRDAYEMERQKR). The stretch at 125 to 158 (GVDFGLQRGFSGSELAKLKLALARAQDPHGPGRK) is one 3; half-length repeat. Pro-155 is modified (proline amide).

Belongs to the diuretic hormone class 2 family. Expressed by the venom secretory cell of the spine. The spine is a cuticular structure containing a single large nucleated venom-secreting cell at its base. It is an independent unit capable of producing, storing and injecting venom. On the back of D.vulnerans caterpillars, spines are grouped together by 50 to 100 to form scoli, of which there are eight in D.vulnerans.

It is found in the secreted. Its function is as follows. Probable toxin. Does not show insecticidal, antimicrobial and antiparasitic activities. Does not induce increase in intracellular calcium in mouse DRG neurons, suggesting that it does not induce pain. This Doratifera vulnerans (Mottled cup moth) protein is U-limacoditoxin(8)-Dv66.